A 283-amino-acid polypeptide reads, in one-letter code: Pantothenate synthetase (283 aa).

31 to 38 provides a ligand contact to ATP; the sequence is MGALHEGH. Histidine 38 (proton donor) is an active-site residue. Residue glutamine 62 participates in (R)-pantoate binding. Glutamine 62 contributes to the beta-alanine binding site. 148–151 provides a ligand contact to ATP; the sequence is GKKD. Glutamine 154 is a binding site for (R)-pantoate. Residues valine 177 and 185–188 contribute to the ATP site; that span reads RSSR.

This sequence belongs to the pantothenate synthetase family. As to quaternary structure, homodimer.

The protein resides in the cytoplasm. It carries out the reaction (R)-pantoate + beta-alanine + ATP = (R)-pantothenate + AMP + diphosphate + H(+). Its pathway is cofactor biosynthesis; (R)-pantothenate biosynthesis; (R)-pantothenate from (R)-pantoate and beta-alanine: step 1/1. In terms of biological role, catalyzes the condensation of pantoate with beta-alanine in an ATP-dependent reaction via a pantoyl-adenylate intermediate. The chain is Pantothenate synthetase from Staphylococcus haemolyticus (strain JCSC1435).